The primary structure comprises 491 residues: MGILAVILDSVCERCSGSSLWMLSTVALLSILVVSVVINVLRQLLFKNYKEPPLVFHWFPFIGSTISYGMDPYRFFFNCREKYGDIFTFVLLGKKTTVYLGTKGNDFILNGKLRDVCAEEVYSPLTTPVFGRHVVYDCPNAKLMEQKKGPNGVFDVCKTIAEITIYTASRSLQGKEVRSRFDSTFAELYHDLDMGFAPINFMLPWAPLPHNRKRDAAQKRMTETYMEIIKERRKAGSKKDSEDMVWNLMSCMYKDGTPVPDEEIAHMMIALLMAGQHSSSSTAAWIVLHLAASPEITEELYQEQLRILGHDMPPLTYENLQKLDLHAKVIKETLRIHAPIHSIIRAVKNPMPVEGTPYVIPTSHNVLSSPGVTARSEEHFPDPLEWKPHRWDEAIAVSSEDEEKVDYGYGLVTKGTNSPYLPFGAGRHRCIGEQFAYVQLGAITAALVRLFKFSNLPGVQTLPDTDYSSLFSKPLGNSKIQFEKREPVTKA.

Residues 20 to 40 (LWMLSTVALLSILVVSVVINV) form a helical membrane-spanning segment. Residue Cys430 coordinates heme.

This sequence belongs to the cytochrome P450 family. Heme serves as cofactor.

The protein localises to the endoplasmic reticulum membrane. The catalysed reaction is a 14alpha-methyl steroid + 3 reduced [NADPH--hemoprotein reductase] + 3 O2 = a Delta(14) steroid + formate + 3 oxidized [NADPH--hemoprotein reductase] + 4 H2O + 4 H(+). It catalyses the reaction a 14alpha-methyl steroid + reduced [NADPH--hemoprotein reductase] + O2 = a 14alpha-hydroxymethyl steroid + oxidized [NADPH--hemoprotein reductase] + H2O + H(+). It carries out the reaction a 14alpha-hydroxymethyl steroid + reduced [NADPH--hemoprotein reductase] + O2 = a 14alpha-formyl steroid + oxidized [NADPH--hemoprotein reductase] + 2 H2O + H(+). The enzyme catalyses a 14alpha-formyl steroid + reduced [NADPH--hemoprotein reductase] + O2 = a Delta(14) steroid + formate + oxidized [NADPH--hemoprotein reductase] + H2O + 2 H(+). The catalysed reaction is lanosterol + 3 reduced [NADPH--hemoprotein reductase] + 3 O2 = 4,4-dimethyl-5alpha-cholesta-8,14,24-trien-3beta-ol + formate + 3 oxidized [NADPH--hemoprotein reductase] + 4 H2O + 4 H(+). It catalyses the reaction lanosterol + reduced [NADPH--hemoprotein reductase] + O2 = 32-hydroxylanosterol + oxidized [NADPH--hemoprotein reductase] + H2O + H(+). It carries out the reaction 32-hydroxylanosterol + reduced [NADPH--hemoprotein reductase] + O2 = 32-oxolanosterol + oxidized [NADPH--hemoprotein reductase] + 2 H2O + H(+). The enzyme catalyses 32-oxolanosterol + reduced [NADPH--hemoprotein reductase] + O2 = 4,4-dimethyl-5alpha-cholesta-8,14,24-trien-3beta-ol + formate + oxidized [NADPH--hemoprotein reductase] + H2O + 2 H(+). The catalysed reaction is eburicol + 3 reduced [NADPH--hemoprotein reductase] + 3 O2 = 14-demethyleburicol + formate + 3 oxidized [NADPH--hemoprotein reductase] + 4 H2O + 4 H(+). It catalyses the reaction eburicol + reduced [NADPH--hemoprotein reductase] + O2 = 32-hydroxyeburicol + oxidized [NADPH--hemoprotein reductase] + H2O + H(+). It carries out the reaction 32-hydroxyeburicol + reduced [NADPH--hemoprotein reductase] + O2 = 32-oxoeburicol + oxidized [NADPH--hemoprotein reductase] + 2 H2O + H(+). The enzyme catalyses 32-oxoeburicol + reduced [NADPH--hemoprotein reductase] + O2 = 14-demethyleburicol + formate + oxidized [NADPH--hemoprotein reductase] + H2O + 2 H(+). The protein operates within steroid biosynthesis; sterol biosynthesis. Its function is as follows. Sterol 14alpha-demethylase, encoded by cyp51A, cyp51B and cyp51C, that plays a critical role in the third module of ergosterol biosynthesis pathway, being ergosterol the major sterol component in fungal membranes that participates in a variety of functions. The third module or late pathway involves the ergosterol synthesis itself through consecutive reactions that mainly occur in the endoplasmic reticulum (ER) membrane. In filamentous fungi, during the initial step of this module, lanosterol (lanosta-8,24-dien-3beta-ol) can be metabolized to eburicol. Sterol 14alpha-demethylase catalyzes the three-step oxidative removal of the 14alpha-methyl group (C-32) of both these sterols in the form of formate, and converts eburicol and lanosterol to 14-demethyleburicol (4,4,24-trimethylergosta-8,14,24(28)-trienol) and 4,4-dimethyl-5alpha-cholesta-8,14,24-trien-3beta-ol, respectively, which are further metabolized by other enzymes in the pathway to ergosterol. Can also use substrates not intrinsic to fungi, such as 24,25-dihydrolanosterol (DHL), producing 4,4'-dimethyl-8,14-cholestadien-3-beta-ol, but at lower rates than the endogenous substrates. Functionally, as a target of azole drugs, plays a crucial role in azole susceptibility. The protein is Sterol 14-alpha demethylase of Aspergillus flavus (strain ATCC 200026 / FGSC A1120 / IAM 13836 / NRRL 3357 / JCM 12722 / SRRC 167).